We begin with the raw amino-acid sequence, 350 residues long: uncharacterized protein (350 aa).

The region spanning 171–334 (PTVVIAGYPN…LKERLKKIAI (164 aa)) is the OBG-type G domain. Residues 177–184 (GYPNVGKS), 219–223 (DTPGL), and 286–289 (NKID) contribute to the GTP site.

It belongs to the TRAFAC class OBG-HflX-like GTPase superfamily. OBG GTPase family. NOG subfamily.

This is an uncharacterized protein from Methanocaldococcus jannaschii (strain ATCC 43067 / DSM 2661 / JAL-1 / JCM 10045 / NBRC 100440) (Methanococcus jannaschii).